A 215-amino-acid polypeptide reads, in one-letter code: uncharacterized protein (215 aa).

This sequence belongs to the thiaminase-2 family.

This is an uncharacterized protein from Haemophilus influenzae (strain ATCC 51907 / DSM 11121 / KW20 / Rd).